The following is a 621-amino-acid chain: F-box/LRR-repeat protein 4 (621 aa).

R28 is modified (asymmetric dimethylarginine). The region spanning 277-332 (NGYFDKLPYELIQLILNHLSLPDLCRLAQTCRLLHQHCCDPLQYIHLNLQPYWARL) is the F-box domain. LRR repeat units lie at residues 376 to 397 (ELVR…EVIS), 402 to 421 (NLQD…AFGH), 427 to 448 (SLKR…SILN), 452 to 474 (ELQH…ASMI), 480 to 501 (NLRT…AELA), 504 to 524 (CVLL…STGC), 532 to 558 (LPNL…ASNC), 559 to 583 (TRLQ…LLES), and 584 to 609 (CKDL…LNAS).

In terms of assembly, part of a SCF (SKP1-CUL1-F-box) protein ligase complex. Interacts with FAF2 and VCP. Interacts with PPTC7; this interaction promotes destruction of BNIP3 and NIX and mitophagy suppression.

The protein resides in the cytoplasm. It is found in the nucleus. Its subcellular location is the mitochondrion outer membrane. Substrate-recognition component of the mitochondria-localized SCF-FBXL4 ubiquitin E3 ligase complex that plays a role in the restriction of mitophagy by controlling the degradation of BNIP3 and NIX mitophagy receptors. Also rescues mitochondrial injury through reverting hyperactivation of DRP1-mediated mitochondrial fission. This chain is F-box/LRR-repeat protein 4 (Fbxl4), found in Mus musculus (Mouse).